The sequence spans 721 residues: Polyribonucleotide nucleotidyltransferase (721 aa).

Positions 495 and 501 each coordinate Mg(2+). The region spanning 562-621 is the KH domain; the sequence is PRLLSFRIDPELIGTVIGPGGRTIKGITERTNTKIDIEDGGIVTIASHDGAAAEEAQKII. In terms of domain architecture, S1 motif spans 631–699; sequence GEIFSGVVTR…SRGRINLTLR (69 aa). The tract at residues 701–721 is disordered; sequence VGQNNGMSYPEPTPTPVAPLN. A compositionally biased stretch (pro residues) spans 711–721; that stretch reads EPTPTPVAPLN.

It belongs to the polyribonucleotide nucleotidyltransferase family. The cofactor is Mg(2+).

It is found in the cytoplasm. It carries out the reaction RNA(n+1) + phosphate = RNA(n) + a ribonucleoside 5'-diphosphate. Its function is as follows. Involved in mRNA degradation. Catalyzes the phosphorolysis of single-stranded polyribonucleotides processively in the 3'- to 5'-direction. This chain is Polyribonucleotide nucleotidyltransferase, found in Prochlorococcus marinus (strain MIT 9215).